Reading from the N-terminus, the 626-residue chain is Acetolactate synthase large subunit (626 aa).

Over residues 1–13 (MNVAASQQPTPAT) the composition is skewed to polar residues. The disordered stretch occupies residues 1–23 (MNVAASQQPTPATVASRGRSAAP). Residue E73 coordinates thiamine diphosphate. Residues R175, 281–302 (HGTVSAVGALQRSDLLIAIGSR), and 324–343 (DIDPAEIGKIKQVEVPIVGD) each bind FAD. The thiamine pyrophosphate binding stretch occupies residues 416 to 496 (QHQMWAAQFV…IKIALINNGN (81 aa)). Mg(2+)-binding residues include D467 and N494.

It belongs to the TPP enzyme family. In terms of assembly, dimer of large and small chains. It depends on Mg(2+) as a cofactor. The cofactor is thiamine diphosphate.

It catalyses the reaction 2 pyruvate + H(+) = (2S)-2-acetolactate + CO2. The protein operates within amino-acid biosynthesis; L-isoleucine biosynthesis; L-isoleucine from 2-oxobutanoate: step 1/4. It participates in amino-acid biosynthesis; L-valine biosynthesis; L-valine from pyruvate: step 1/4. The polypeptide is Acetolactate synthase large subunit (ilvB) (Corynebacterium glutamicum (strain ATCC 13032 / DSM 20300 / JCM 1318 / BCRC 11384 / CCUG 27702 / LMG 3730 / NBRC 12168 / NCIMB 10025 / NRRL B-2784 / 534)).